We begin with the raw amino-acid sequence, 230 residues long: Flagellar L-ring protein (230 aa).

The N-terminal stretch at 1–18 (MNRLNIAVSCLATALLFG) is a signal peptide. Cys-19 carries the N-palmitoyl cysteine lipid modification. Cys-19 carries the S-diacylglycerol cysteine lipid modification.

This sequence belongs to the FlgH family. In terms of assembly, the basal body constitutes a major portion of the flagellar organelle and consists of four rings (L,P,S, and M) mounted on a central rod.

It localises to the cell outer membrane. Its subcellular location is the bacterial flagellum basal body. Assembles around the rod to form the L-ring and probably protects the motor/basal body from shearing forces during rotation. The chain is Flagellar L-ring protein from Legionella pneumophila (strain Paris).